A 484-amino-acid polypeptide reads, in one-letter code: MKFIVKLYPEIMMKSKPVRMRFTKMLETNIRNVLKKVDEDAKVQRQWDRIMVMVPKDKPELAQAFGERLACIPGIAHVVQVDEYSFESVDDIYQQVLPVYRDQLAGKTFCVRVKRTGDHDFNSIEVERYVGGGLNQFTDALGVRLKNPDITVNLEIERDNLYMVTKRIEGLGGFPMATQEDVLSLISGGFDSGVSSYQFIKKGARTHYCFFNLGGAQHEIGVKQVAYHLWKTYGESHKVKFISVPFEPVVAEILERIDNGQMGVVLKRMMMRTAARIADRMGIQALVTGESLGQVSSQTLTNLNVIDRCTELLILRPLIAMDKQDIINESRKIGTEDFAKSMPEYCGVISQKPTVKAVLAKVEAEEKKFSEDLIDQIIAQSVTIDIREIAEQMDTRITETETVASIDTNQVVIDIRAPEEEESKPLQIEGIEIKRIPFFKLATQFADLDKQKTYLLYCERGVMSKLQALYLIEQGYTNVKVYRP.

Residues 63-167 form the THUMP domain; it reads QAFGERLACI…RDNLYMVTKR (105 aa). Residues 185-186, Lys-267, Gly-289, and Gln-298 contribute to the ATP site; that span reads LI. Cys-346 and Cys-458 are joined by a disulfide. Positions 406–484 constitute a Rhodanese domain; that stretch reads IDTNQVVIDI…GYTNVKVYRP (79 aa). Catalysis depends on Cys-458, which acts as the Cysteine persulfide intermediate.

The protein belongs to the ThiI family.

The protein localises to the cytoplasm. It carries out the reaction [ThiI sulfur-carrier protein]-S-sulfanyl-L-cysteine + a uridine in tRNA + 2 reduced [2Fe-2S]-[ferredoxin] + ATP + H(+) = [ThiI sulfur-carrier protein]-L-cysteine + a 4-thiouridine in tRNA + 2 oxidized [2Fe-2S]-[ferredoxin] + AMP + diphosphate. It catalyses the reaction [ThiS sulfur-carrier protein]-C-terminal Gly-Gly-AMP + S-sulfanyl-L-cysteinyl-[cysteine desulfurase] + AH2 = [ThiS sulfur-carrier protein]-C-terminal-Gly-aminoethanethioate + L-cysteinyl-[cysteine desulfurase] + A + AMP + 2 H(+). It functions in the pathway cofactor biosynthesis; thiamine diphosphate biosynthesis. Its function is as follows. Catalyzes the ATP-dependent transfer of a sulfur to tRNA to produce 4-thiouridine in position 8 of tRNAs, which functions as a near-UV photosensor. Also catalyzes the transfer of sulfur to the sulfur carrier protein ThiS, forming ThiS-thiocarboxylate. This is a step in the synthesis of thiazole, in the thiamine biosynthesis pathway. The sulfur is donated as persulfide by IscS. The sequence is that of tRNA sulfurtransferase from Shewanella baltica (strain OS155 / ATCC BAA-1091).